Here is a 77-residue protein sequence, read N- to C-terminus: Small ribosomal subunit protein bS18 (77 aa).

Belongs to the bacterial ribosomal protein bS18 family. In terms of assembly, part of the 30S ribosomal subunit. Forms a tight heterodimer with protein bS6.

Functionally, binds as a heterodimer with protein bS6 to the central domain of the 16S rRNA, where it helps stabilize the platform of the 30S subunit. This chain is Small ribosomal subunit protein bS18, found in Lactobacillus gasseri (strain ATCC 33323 / DSM 20243 / BCRC 14619 / CIP 102991 / JCM 1131 / KCTC 3163 / NCIMB 11718 / NCTC 13722 / AM63).